Here is a 795-residue protein sequence, read N- to C-terminus: Glutamine--tRNA ligase, cytoplasmic (795 aa).

Residues 188-220 (ADNEKPTKKKEKKEKPAKVEEKKAVVETTAEPS) are disordered. Residues 200–212 (KEKPAKVEEKKAV) show a composition bias toward basic and acidic residues. Residues 277–287 (PEPNGYLHIGH) carry the 'HIGH' region motif. Residues 278-280 (EPN) and 284-290 (HIGHAKA) contribute to the ATP site. L-glutamine-binding residues include Asp310 and Tyr450. Residues Thr469, 498-499 (RL), and 506-508 (MSK) contribute to the ATP site. Residues 505–509 (VMSKR) carry the 'KMSKS' region motif.

It belongs to the class-I aminoacyl-tRNA synthetase family.

It localises to the cytoplasm. It is found in the cytosol. It carries out the reaction tRNA(Gln) + L-glutamine + ATP = L-glutaminyl-tRNA(Gln) + AMP + diphosphate. The sequence is that of Glutamine--tRNA ligase, cytoplasmic from Arabidopsis thaliana (Mouse-ear cress).